The sequence spans 477 residues: Methylenetetrahydrofolate--tRNA-(uracil-5-)-methyltransferase TrmFO (477 aa).

15–20 (GAGLAG) is a binding site for FAD.

The protein belongs to the MnmG family. TrmFO subfamily. FAD is required as a cofactor.

Its subcellular location is the cytoplasm. It carries out the reaction uridine(54) in tRNA + (6R)-5,10-methylene-5,6,7,8-tetrahydrofolate + NADH + H(+) = 5-methyluridine(54) in tRNA + (6S)-5,6,7,8-tetrahydrofolate + NAD(+). It catalyses the reaction uridine(54) in tRNA + (6R)-5,10-methylene-5,6,7,8-tetrahydrofolate + NADPH + H(+) = 5-methyluridine(54) in tRNA + (6S)-5,6,7,8-tetrahydrofolate + NADP(+). Its function is as follows. Catalyzes the folate-dependent formation of 5-methyl-uridine at position 54 (M-5-U54) in all tRNAs. The sequence is that of Methylenetetrahydrofolate--tRNA-(uracil-5-)-methyltransferase TrmFO from Nitrobacter winogradskyi (strain ATCC 25391 / DSM 10237 / CIP 104748 / NCIMB 11846 / Nb-255).